The primary structure comprises 213 residues: Protein Nef (213 aa).

Gly-2 is lipidated: N-myristoyl glycine; by host. Residues 68–71 are acidic; interacts with host PACS1 and PACS2; stabilizes the interaction of NEF/MHC-I with host AP1M1; necessary for MHC-I internalization; the sequence is QEEE. Residues 75-84 are SH3-binding; interaction with Src family tyrosine kinases; it reads PVAPQVPLRP. Residues 78-81 carry the PxxP; stabilizes the interaction of NEF/MHC-I with host AP1M1; necessary for MHC-I internalization motif; it reads PQVP. The tract at residues 114–130 is mediates dimerization, Nef-PTE1 interaction; that stretch reads EILDLWVYNTQGFFPDW. The interval 154–187 is binding to ATP6V1H; that stretch reads VSEEEAERLGNTCERANLLHPACAHGFEDTHKEI. Residues 171 to 172 carry the Dileucine internalization motif; necessary for CD4 internalization motif; sequence LL. Positions 181–182 match the Diacidic; necessary for CD4 internalization motif; the sequence is ED.

The protein belongs to the lentivirus primate group Nef protein family. Monomer; cytosolic form. Homodimer; membrane bound form. Interacts with Nef associated p21-activated kinase (PAK2); this interaction activates PAK2. Associates with the Nef-MHC-I-AP1 complex; this complex is required for MHC-I internalization. Interacts (via C-terminus) with host PI3-kinase. Interacts with host PACS1; this interaction seems to be weak. Interacts with host PACS2. Interacts with host LCK and MAPK3; these interactions inhibit the kinase activity of the latter. Interacts with host ATP6V1H; this interaction may play a role in CD4 endocytosis. Associates with the CD4-Nef-AP2 complex; this complex is required for CD4 internalization. Interacts with host AP2 subunit alpha and AP2 subunit sigma2. Interacts with TCR-zeta chain; this interaction up-regulates the Fas ligand (FasL) surface expression. Interacts with host HCK, LYN, and SRC; these interactions activate the Src family kinases. Interacts with MAP3K5; this interaction inhibits the Fas and TNFR-mediated death signals. Interacts with beta-COP and PTE1. Interacts with human RACK1; this increases Nef phosphorylation by PKC. Interacts with TP53; this interaction decreases the half-life of TP53, protecting the infected cell against p53-mediated apoptosis. The virion-associated Nef proteins are cleaved by the viral protease to release the soluble C-terminal core protein. Nef is probably cleaved concomitantly with viral structural proteins on maturation of virus particles. In terms of processing, myristoylated. Post-translationally, phosphorylated on serine residues, probably by host PKCdelta and theta.

It localises to the host cell membrane. The protein resides in the virion. Its subcellular location is the secreted. The protein localises to the host Golgi apparatus membrane. In terms of biological role, factor of infectivity and pathogenicity, required for optimal virus replication. Alters numerous pathways of T-lymphocyte function and down-regulates immunity surface molecules in order to evade host defense and increase viral infectivity. Alters the functionality of other immunity cells, like dendritic cells, monocytes/macrophages and NK cells. Its function is as follows. In infected CD4(+) T-lymphocytes, down-regulates the surface MHC-I, mature MHC-II, CD4, CD28, CCR5 and CXCR4 molecules. Mediates internalization and degradation of host CD4 through the interaction of with the cytoplasmic tail of CD4, the recruitment of AP-2 (clathrin adapter protein complex 2), internalization through clathrin coated pits, and subsequent transport to endosomes and lysosomes for degradation. Diverts host MHC-I molecules to the trans-Golgi network-associated endosomal compartments by an endocytic pathway to finally target them for degradation. MHC-I down-regulation may involve AP-1 (clathrin adapter protein complex 1) or possibly Src family kinase-ZAP70/Syk-PI3K cascade recruited by PACS2. In consequence infected cells are masked for immune recognition by cytotoxic T-lymphocytes. Decreasing the number of immune receptors also prevents reinfection by more HIV particles (superinfection). Down-regulates host SERINC3 and SERINC5 thereby excluding these proteins from the viral particles. Virion infectivity is drastically higher when SERINC3 or SERINC5 are excluded from the viral envelope, because these host antiviral proteins impair the membrane fusion event necessary for subsequent virion penetration. Functionally, bypasses host T-cell signaling by inducing a transcriptional program nearly identical to that of anti-CD3 cell activation. Interaction with TCR-zeta chain up-regulates the Fas ligand (FasL). Increasing surface FasL molecules and decreasing surface MHC-I molecules on infected CD4(+) cells send attacking cytotoxic CD8+ T-lymphocytes into apoptosis. Plays a role in optimizing the host cell environment for viral replication without causing cell death by apoptosis. Protects the infected cells from apoptosis in order to keep them alive until the next virus generation is ready to strike. Inhibits the Fas and TNFR-mediated death signals by blocking MAP3K5/ASK1. Decreases the half-life of TP53, protecting the infected cell against p53-mediated apoptosis. Inhibits the apoptotic signals regulated by the Bcl-2 family proteins through the formation of a Nef/PI3-kinase/PAK2 complex that leads to activation of PAK2 and induces phosphorylation of host BAD. In terms of biological role, extracellular Nef protein targets CD4(+) T-lymphocytes for apoptosis by interacting with CXCR4 surface receptors. The sequence is that of Protein Nef from Human immunodeficiency virus type 1 group O (isolate ANT70) (HIV-1).